Reading from the N-terminus, the 500-residue chain is NAD(P)H-quinone oxidoreductase chain 4, chloroplastic (500 aa).

Transmembrane regions (helical) follow at residues 4–24, 37–57, 87–107, 113–130, 134–154, 167–187, 207–227, 242–262, 272–292, 305–325, 330–350, 364–384, 386–406, 417–437, and 463–483; these read FPWL…LFFF, ICIC…HFEL, IGPI…AWPV, LFYF…GSFS, LLLF…LLSM, FILY…GIGL, IALE…KSPI, HYST…YGLV, AHSI…IYAA, IAYS…SISD, GAIL…FLAG, MGGL…LSMA, LALP…GIIT, VITL…LSML, and FVAI…DFVF.

The protein belongs to the complex I subunit 4 family.

Its subcellular location is the plastid. It localises to the chloroplast thylakoid membrane. The catalysed reaction is a plastoquinone + NADH + (n+1) H(+)(in) = a plastoquinol + NAD(+) + n H(+)(out). It carries out the reaction a plastoquinone + NADPH + (n+1) H(+)(in) = a plastoquinol + NADP(+) + n H(+)(out). This Cucumis sativus (Cucumber) protein is NAD(P)H-quinone oxidoreductase chain 4, chloroplastic.